A 332-amino-acid chain; its full sequence is Large ribosomal subunit protein mL44 (332 aa).

The N-terminal 30 residues, 1–30 (MASGLVRLLQQGHRCLLAPVAPKLVPPVRG), are a transit peptide targeting the mitochondrion. The 143-residue stretch at 86–228 (DLLKTAFVNS…LITQMTGKEL (143 aa)) folds into the RNase III domain. The region spanning 236 to 306 (NPMGLLVEEL…ARVALRKLYG (71 aa)) is the DRBM domain.

Belongs to the ribonuclease III family. Mitochondrion-specific ribosomal protein mL44 subfamily. Component of the mitochondrial large ribosomal subunit (mt-LSU). Mature mammalian 55S mitochondrial ribosomes consist of a small (28S) and a large (39S) subunit. The 28S small subunit contains a 12S ribosomal RNA (12S mt-rRNA) and 30 different proteins. The 39S large subunit contains a 16S rRNA (16S mt-rRNA), a copy of mitochondrial valine transfer RNA (mt-tRNA(Val)), which plays an integral structural role, and 52 different proteins.

The protein localises to the mitochondrion. In terms of biological role, component of the 39S subunit of mitochondrial ribosome. May have a function in the assembly/stability of nascent mitochondrial polypeptides exiting the ribosome. The sequence is that of Large ribosomal subunit protein mL44 (MRPL44) from Homo sapiens (Human).